A 730-amino-acid chain; its full sequence is Dual function macrocyclase-peptidase POPB (730 aa).

A disordered region spans residues 1 to 34 (MSSVTWAPGNYPSTRRSDHVDTYQSASKGEVPVP). Catalysis depends on charge relay system residues Ser-577, Asp-661, and His-698.

The protein belongs to the peptidase S9A family. In terms of assembly, monomer.

The enzyme catalyses Hydrolysis of Pro-|-Xaa &gt;&gt; Ala-|-Xaa in oligopeptides.. In terms of biological role, dual function macrocyclase-peptidase involved in the biosynthesis of the highly toxic amanitin toxin family of macrocycles. Cleaves peptide bonds on the C-terminal side of prolyl residues. The enzyme first removes 10 residues from the N-terminus of a 35-residue substrate. Conformational trapping of the 25 amino-acid peptide forces the enzyme to release this intermediate rather than proceed to macrocyclization. The enzyme rebinds the 25 amino-acid peptide in a different conformation and catalyzes macrocyclization of the N-terminal eight residues. This chain is Dual function macrocyclase-peptidase POPB, found in Galerina marginata (strain CBS 339.88).